The following is a 417-amino-acid chain: Pre-mRNA-splicing factor PRP46 (417 aa).

WD repeat units lie at residues 119 to 159 (AHQG…LKAT), 162 to 201 (GHIM…SSSG), 209 to 248 (GHVG…EIMV), 251 to 290 (GHRS…TQLA), 293 to 334 (HHSK…NEFG), 337 to 376 (GENK…LLQS), and 385 to 417 (STES…WGEE).

It belongs to the WD repeat PRL1/PRL2 family. Associated with the spliceosome.

The protein resides in the cytoplasm. Its subcellular location is the nucleus. Functionally, involved in pre-mRNA splicing and required for cell cycle progression at G2/M. This chain is Pre-mRNA-splicing factor PRP46 (PRP46), found in Debaryomyces hansenii (strain ATCC 36239 / CBS 767 / BCRC 21394 / JCM 1990 / NBRC 0083 / IGC 2968) (Yeast).